The chain runs to 445 residues: Transcription activator AFTR-1 (445 aa).

Positions 17–44 (CDFCTQSKLRCNKNKPSCRRCTLQQQPC) form a DNA-binding region, zn(2)-C6 fungal-type. The segment at 50 to 89 (RRTGRPPKHPRKANDCQEANGQHGDQDPVTSTPGGSYQQQ) is disordered. Residues 51–60 (RTGRPPKHPR) are compositionally biased toward basic residues. A compositionally biased stretch (polar residues) spans 77 to 89 (PVTSTPGGSYQQQ).

It is found in the nucleus. In terms of biological role, transcription factor that regulates the expression of the gene clusters that mediate the biosynthesis of the host-selective toxins (HSTs) AF-toxins responsible for Alternaria black spot of strawberry disease by the strawberry pathotype. On cellular level, AF-toxins affect plasma membrane of susceptible cells and cause a sudden increase in loss of K(+) after a few minutes of toxin treatment. This Alternaria alternata (Alternaria rot fungus) protein is Transcription activator AFTR-1.